The following is a 50-amino-acid chain: uncharacterized protein (50 aa).

This is an uncharacterized protein from Thermoproteus tenax virus 1 (strain KRA1) (TTV1).